Here is a 643-residue protein sequence, read N- to C-terminus: Phosphatidylinositol-3,5-bisphosphate 3-phosphatase MTMR2 (643 aa).

Composition is skewed to polar residues over residues 1–12 (MEKSSSCESLGS) and 23–40 (DSLS…VHTK). The segment at 1 to 54 (MEKSSSCESLGSQPAVARPPSVDSLSSASTSHSENSVHTKSASVVSSDSISTSA) is disordered. Phosphoserine is present on residues serine 6 and serine 9. Over residues 41–54 (SASVVSSDSISTSA) the composition is skewed to low complexity. At serine 58 the chain carries Phosphoserine. A GRAM domain is found at 68 to 139 (NKLAEMEEPP…GVISRVEKIG (72 aa)). Positions 205-580 (GWKLYDSLSE…RHLELWVGYY (376 aa)) constitute a Myotubularin phosphatase domain. Residues asparagine 330, asparagine 355, and isoleucine 356 each contribute to the a 1,2-diacyl-sn-glycero-3-phospho-(1D-myo-inositol-3,5-bisphosphate) site. A 1,2-diacyl-sn-glycero-3-phospho-(1D-myo-inositol-3-phosphate) contacts are provided by asparagine 330, asparagine 355, and isoleucine 356. Catalysis depends on cysteine 417, which acts as the Phosphocysteine intermediate. A 1,2-diacyl-sn-glycero-3-phospho-(1D-myo-inositol-3,5-bisphosphate) contacts are provided by serine 418, aspartate 419, glycine 420, tryptophan 421, aspartate 422, arginine 423, arginine 459, and arginine 463. The a 1,2-diacyl-sn-glycero-3-phospho-(1D-myo-inositol-3-phosphate) site is built by serine 418, aspartate 419, glycine 420, tryptophan 421, aspartate 422, and arginine 423. An a 1,2-diacyl-sn-glycero-3-phospho-(1D-myo-inositol-3-phosphate)-binding site is contributed by arginine 463. The stretch at 593 to 627 (IHNRYKELLAKRAELQKKVEELQREISNRSTSSSE) forms a coiled coil. The segment at 614 to 643 (LQREISNRSTSSSERAGSPAQCVTPVQTVV) is disordered.

It belongs to the protein-tyrosine phosphatase family. Non-receptor class myotubularin subfamily. As to quaternary structure, homodimer (via coiled-coil domain). Heterotetramer consisting of one MTMR2 dimer and one SBF2/MTMR13 dimer; specifically in peripheral nerves stabilizes SBF2/MTMR13 at the membranes and increases MTMR2 catalytic activity towards phosphatidylinositol 3,5-bisphosphate and to a lesser extent towards phosphatidylinositol 3-phosphate. Heterodimer with SBF1/MTMR5; acts as an adapter for the phosphatase MTMR2 to regulate MTMR2 catalytic activity and subcellular location. Heterodimer with MTMR12. Phosphorylation at Ser-58 decreases MTMR2 localization to endocytic vesicular structures.

Its subcellular location is the cytoplasm. It is found in the early endosome membrane. It localises to the perinuclear region. The protein localises to the cell projection. The protein resides in the axon. Its subcellular location is the endosome membrane. The enzyme catalyses a 1,2-diacyl-sn-glycero-3-phospho-(1D-myo-inositol-3,5-bisphosphate) + H2O = a 1,2-diacyl-sn-glycero-3-phospho-(1D-myo-inositol-5-phosphate) + phosphate. It carries out the reaction a 1,2-diacyl-sn-glycero-3-phospho-(1D-myo-inositol-3-phosphate) + H2O = a 1,2-diacyl-sn-glycero-3-phospho-(1D-myo-inositol) + phosphate. It catalyses the reaction 1,2-dioctanoyl-sn-glycero-3-phospho-(1-D-myo-inositol-3-phosphate) + H2O = 1,2-dioctanoyl-sn-glycero-3-phospho-(1D-myo-inositol) + phosphate. The catalysed reaction is 1,2-dioctanoyl-sn-glycero-3-phospho-(1D-myo-inositol-3,5-bisphosphate) + H2O = 1,2-dioctanoyl-sn-glycero-3-phospho-(1D-myo-inositol-5-phosphate) + phosphate. In terms of biological role, lipid phosphatase that specifically dephosphorylates the D-3 position of phosphatidylinositol 3-phosphate and phosphatidylinositol 3,5-bisphosphate, generating phosphatidylinositol and phosphatidylinositol 5-phosphate. Regulates the level of these phosphoinositides critical for various biological processes including autophagy initiation and autophagosome maturation. This chain is Phosphatidylinositol-3,5-bisphosphate 3-phosphatase MTMR2, found in Bos taurus (Bovine).